Consider the following 362-residue polypeptide: 3-dehydroquinate synthase (362 aa).

Residues 72 to 77, 106 to 110, 130 to 131, K143, K152, and 170 to 173 contribute to the NAD(+) site; these read DGEQYK, GVVGD, TT, and CLKT. Zn(2+)-binding residues include E185, H248, and H265.

The protein belongs to the sugar phosphate cyclases superfamily. Dehydroquinate synthase family. The cofactor is Co(2+). Zn(2+) serves as cofactor. Requires NAD(+) as cofactor.

Its subcellular location is the cytoplasm. The catalysed reaction is 7-phospho-2-dehydro-3-deoxy-D-arabino-heptonate = 3-dehydroquinate + phosphate. It functions in the pathway metabolic intermediate biosynthesis; chorismate biosynthesis; chorismate from D-erythrose 4-phosphate and phosphoenolpyruvate: step 2/7. Its function is as follows. Catalyzes the conversion of 3-deoxy-D-arabino-heptulosonate 7-phosphate (DAHP) to dehydroquinate (DHQ). The protein is 3-dehydroquinate synthase of Aliivibrio salmonicida (strain LFI1238) (Vibrio salmonicida (strain LFI1238)).